Consider the following 368-residue polypeptide: Phosphoribosylaminoimidazole-succinocarboxamide synthase (368 aa).

Belongs to the SAICAR synthetase family.

The enzyme catalyses 5-amino-1-(5-phospho-D-ribosyl)imidazole-4-carboxylate + L-aspartate + ATP = (2S)-2-[5-amino-1-(5-phospho-beta-D-ribosyl)imidazole-4-carboxamido]succinate + ADP + phosphate + 2 H(+). It participates in purine metabolism; IMP biosynthesis via de novo pathway; 5-amino-1-(5-phospho-D-ribosyl)imidazole-4-carboxamide from 5-amino-1-(5-phospho-D-ribosyl)imidazole-4-carboxylate: step 1/2. This is Phosphoribosylaminoimidazole-succinocarboxamide synthase from Vibrio cholerae serotype O1 (strain ATCC 39315 / El Tor Inaba N16961).